A 292-amino-acid polypeptide reads, in one-letter code: Ribosomal protein L11 methyltransferase (292 aa).

Residues threonine 144, glycine 165, aspartate 187, and asparagine 229 each coordinate S-adenosyl-L-methionine.

Belongs to the methyltransferase superfamily. PrmA family.

Its subcellular location is the cytoplasm. The catalysed reaction is L-lysyl-[protein] + 3 S-adenosyl-L-methionine = N(6),N(6),N(6)-trimethyl-L-lysyl-[protein] + 3 S-adenosyl-L-homocysteine + 3 H(+). Functionally, methylates ribosomal protein L11. The chain is Ribosomal protein L11 methyltransferase from Pseudomonas fluorescens (strain SBW25).